We begin with the raw amino-acid sequence, 681 residues long: Sodium-dependent phosphate transporter 1 (681 aa).

Helical transmembrane passes span 25–45, 66–86, 106–126, 162–182, 201–221, and 234–254; these read NLWM…SVGA, ACIL…AKVS, LMAG…VASF, IVMS…ILFF, ALPI…MYTG, and GTIL…WFFV. The tract at residues 266–295 is disordered; sequence VKSSPSESPLMEKKNNLKDHEETKMAPGDV. A phosphoserine mark is found at S269 and S273. Residues 275–289 show a composition bias toward basic and acidic residues; that stretch reads LMEKKNNLKDHEETK. Transmembrane regions (helical) follow at residues 513-533, 561-581, 602-622, and 652-672; these read VSLL…FAHG, ATPI…LWVW, FSIE…GLPI, and IFMA…AIMA.

Belongs to the inorganic phosphate transporter (PiT) (TC 2.A.20) family. In terms of tissue distribution, ubiquitously expressed.

The protein localises to the cell membrane. It carries out the reaction 2 Na(+)(out) + phosphate(out) = 2 Na(+)(in) + phosphate(in). Its function is as follows. Sodium-phosphate symporter which preferentially transports the monovalent form of phosphate with a stoichiometry of two sodium ions per phosphate ion. May play a role in extracellular matrix and cartilage calcification as well as in vascular calcification. Essential for cell proliferation but this function is independent of its phosphate transporter activity. In Rattus norvegicus (Rat), this protein is Sodium-dependent phosphate transporter 1 (Slc20a1).